An 839-amino-acid polypeptide reads, in one-letter code: V-type proton ATPase 116 kDa subunit a 1 (839 aa).

The Cytoplasmic segment spans residues 1–395 (MGELFRSEEM…DAYGIGTYRE (395 aa)). Phosphothreonine is present on residues threonine 257 and threonine 367. Tyrosine 371 carries the phosphotyrosine modification. The helical transmembrane segment at 396–414 (INPAPYTVITFPFLFAVMF) threads the bilayer. Residues 415–416 (GD) lie on the Vacuolar side of the membrane. The helical transmembrane segment at 417–433 (FGHGILMTLFAVWMVLR) threads the bilayer. The Cytoplasmic portion of the chain corresponds to 434–448 (ESRILSQKHENEMFS). Residues 449–478 (MVFSGRYIILLMGLFSIYTGLIYNDCFSKS) form a helical membrane-spanning segment. Residues 479–542 (LNIFGSSWSV…ATNKLTFLNS (64 aa)) are Vacuolar-facing. Residues 543–562 (FKMKMSVILGIIHMLFGVSL) form a helical membrane-spanning segment. At 563–580 (SLFNHIYFKKPLNIYFGF) the chain is on the cytoplasmic side. The chain crosses the membrane as a helical span at residues 581 to 601 (IPEIIFMSSLFGYLVILIFYK). At 602 to 646 (WTAYDAHSSRNAPSLLIHFINMFLFSYPESGNAMLYSGQKGIQCF) the chain is on the vacuolar side. A helical membrane pass occupies residues 647–666 (LIVVAMLCVPWMLLFKPLIL). Residues 667-726 (RHQYLRKKHLGTLNFGGIRVGNGPTEEDAEIIQHDQLSTHSEDAEEFDFGDTMVHQAIHT) are Cytoplasmic-facing. A helical membrane pass occupies residues 727 to 751 (IEYCLGCISNTASYLRLWALSLAHA). Over 752 to 772 (QLSEVLWTMVIHIGLHVRSLA) the chain is Vacuolar. The chain crosses the membrane as a helical span at residues 773 to 811 (GGLGLFFIFAAFATLTVAILLIMEGLSAFLHALRLHWVE). The Cytoplasmic segment spans residues 812–839 (FQNKFYTGTGFKFLPFSFEHIREGKFDE).

The protein belongs to the V-ATPase 116 kDa subunit family. In terms of assembly, V-ATPase is a heteromultimeric enzyme made up of two complexes: the ATP-hydrolytic V1 complex and the proton translocation V0 complex. The V1 complex consists of three catalytic AB heterodimers that form a heterohexamer, three peripheral stalks each consisting of EG heterodimers, one central rotor including subunits D and F, and the regulatory subunits C and H. The proton translocation complex V0 consists of the proton transport subunit a, a ring of proteolipid subunits c9c'', rotary subunit d, subunits e and f, and the accessory subunits ATP6AP1/Ac45 and ATP6AP2/PRR. Interacts with SPAAR. In terms of tissue distribution, predominantly expressed in neurons in the cortex and in the dentate gyrus, CA1 and CA3 regions of the hippocampus (at protein level). Expressed at lower levels in astrocytes, oligodendrocytes and microglia (at protein level). In the cerebellum, present in Purkinje and granule cells (at protein level).

It localises to the cytoplasmic vesicle. The protein resides in the clathrin-coated vesicle membrane. It is found in the secretory vesicle. Its subcellular location is the synaptic vesicle membrane. The protein localises to the melanosome. Subunit of the V0 complex of vacuolar(H+)-ATPase (V-ATPase), a multisubunit enzyme composed of a peripheral complex (V1) that hydrolyzes ATP and a membrane integral complex (V0) that translocates protons. V-ATPase is responsible for the acidification of various organelles, such as lysosomes, endosomes, the trans-Golgi network, and secretory granules, including synaptic vesicles. In certain cell types, can be exported to the plasma membrane, where it is involved in the acidification of the extracellular environment. Required for assembly and activity of the vacuolar ATPase. Through its action on compartment acidification, plays an essential role in neuronal development in terms of integrity and connectivity of neurons. The sequence is that of V-type proton ATPase 116 kDa subunit a 1 (Atp6v0a1) from Mus musculus (Mouse).